Consider the following 343-residue polypeptide: Trace amine-associated receptor 3 (343 aa).

Residues 1-35 (MDLIYIPEDLSSCPKFGNKSCPPTNRSFRVRMIMY) are Extracellular-facing. N-linked (GlcNAc...) asparagine glycans are attached at residues asparagine 18 and asparagine 25. 2 cysteine pairs are disulfide-bonded: cysteine 21/cysteine 185 and cysteine 104/cysteine 189. The chain crosses the membrane as a helical span at residues 36-56 (LFMTGAMVITIFGNLVIIISI). Residues 57 to 68 (SHFKQLHSPTNF) are Cytoplasmic-facing. Residues 69–89 (LILSMATTDFLLGFVIMPYSM) form a helical membrane-spanning segment. Topologically, residues 90–150 (VRSVESCWYF…TTMTVSMIKR (61 aa)) are extracellular. The helical transmembrane segment at 151 to 168 (LLAFCWAAPALFSFGLVL) threads the bilayer. Residues 169–172 (SEAN) are Cytoplasmic-facing. Residues 173–186 (VSGMQSYEILVACF) form an extracellular Loop 2 (ECL2) region. The helical transmembrane segment at 173-193 (VSGMQSYEILVACFNFCALTF) threads the bilayer. Residues 194–198 (NKFWG) lie on the Extracellular side of the membrane. A helical transmembrane segment spans residues 199 to 223 (TILFTTCFFTPGSIMVGIYGKIFIV). Residues 224-257 (SRRHARALSDMPANTKGAVGKNLSKKKDRKAAKT) are Cytoplasmic-facing. The helical transmembrane segment at 258 to 278 (LGIVMGVFLACWLPCFLAVLI) threads the bilayer. Topologically, residues 279–287 (DPYLDYSTP) are extracellular. Residues 288-308 (IIVLDLLVWLGYFNSTCNPLI) form a helical membrane-spanning segment. Residues 309 to 343 (HGFFYPWFRKALQFIVSGKIFRSNSDTANLFPEAH) are Cytoplasmic-facing.

This sequence belongs to the G-protein coupled receptor 1 family. As to expression, specifically expressed in neurons of the olfactory epithelium.

It localises to the cell membrane. Its function is as follows. Olfactory receptor activated by several primary trace amines, including isoamylamine. Activated by isoamylamine and cyclohexylamine, but not to the corresponding alcohols, isoamylalcohol and cyclohexanol. This receptor is probably mediated by the G(s)-class of G-proteins which activate adenylate cyclase. This is Trace amine-associated receptor 3 from Mus musculus (Mouse).